We begin with the raw amino-acid sequence, 602 residues long: Exopolysaccharide phosphotransferase SCO2594 (602 aa).

A disordered region spans residues 251 to 271; sequence PRAGEDLDAGDGAAGGPRPGL.

This sequence belongs to the stealth family.

This chain is Exopolysaccharide phosphotransferase SCO2594, found in Streptomyces coelicolor (strain ATCC BAA-471 / A3(2) / M145).